A 524-amino-acid polypeptide reads, in one-letter code: MTSVPAGAISKRDNVVVFDTTMRDGEQSPGASMSLEEKLELAKILEEMGVDVIEAGFPIASNGDFEAVRQIAELITESTVCGLARAAAGDIDRCAEAVRRAKRGRIHTFISTSPVHMKYKLQMEPDAVLEAITRSVSHARNLVGDVEWSAEDATRTERDFLKRCVEAAIKAGATTINLPDTVGYSYPSEYGELFRDVITSVPGADKAIFSAHCHNDLGLAVANSIAAIEGGARQVEVAINGIGERAGNAALEEIVMALRVRGDHLPYGTSVDPVHITRASRYVSAITGFPVQFNKAIVGKNAFAHESGIHQDGMLKNAETYEIMKPEDVGQGATNLVMGKHSGRHAFREKLKALGYELGQNALNDAFGRFKELADKKKHVFDDDIVALVDDALARGSEKIRVSRLRVVAGTDGQSAELTLDIDGVASTAEATGDGPVDAVFNAIHKIVPHSAALRLFQVHAVTEGTDAQAQVSVRLEEDGRIATGAAADTDTLTASAKAYVNALNNLFARKEKSRPEAAIASGF.

The region spanning 15-275 (VVVFDTTMRD…PYGTSVDPVH (261 aa)) is the Pyruvate carboxyltransferase domain. 4 residues coordinate Mn(2+): aspartate 24, histidine 212, histidine 214, and asparagine 248. Positions 401–524 (RVSRLRVVAG…RPEAAIASGF (124 aa)) are regulatory domain.

Belongs to the alpha-IPM synthase/homocitrate synthase family. LeuA type 1 subfamily. In terms of assembly, homodimer. Mn(2+) serves as cofactor.

It localises to the cytoplasm. The catalysed reaction is 3-methyl-2-oxobutanoate + acetyl-CoA + H2O = (2S)-2-isopropylmalate + CoA + H(+). It functions in the pathway amino-acid biosynthesis; L-leucine biosynthesis; L-leucine from 3-methyl-2-oxobutanoate: step 1/4. Catalyzes the condensation of the acetyl group of acetyl-CoA with 3-methyl-2-oxobutanoate (2-ketoisovalerate) to form 3-carboxy-3-hydroxy-4-methylpentanoate (2-isopropylmalate). The sequence is that of 2-isopropylmalate synthase from Caulobacter vibrioides (strain ATCC 19089 / CIP 103742 / CB 15) (Caulobacter crescentus).